A 167-amino-acid polypeptide reads, in one-letter code: Translationally-controlled tumor protein homolog (167 aa).

In terms of domain architecture, TCTP spans 1–167 (MIIFKDVISN…WKHGIKEEKI (167 aa)).

The protein belongs to the TCTP family.

The protein localises to the cytoplasm. It localises to the cytoskeleton. Functionally, involved in protein synthesis. Involved in microtubule stabilization. This Yarrowia lipolytica (strain CLIB 122 / E 150) (Yeast) protein is Translationally-controlled tumor protein homolog.